A 154-amino-acid chain; its full sequence is 6,7-dimethyl-8-ribityllumazine synthase (154 aa).

5-amino-6-(D-ribitylamino)uracil-binding positions include Phe-22, 56 to 58 (AFE), and 80 to 82 (AVI). Position 85 to 86 (85 to 86 (AT)) interacts with (2S)-2-hydroxy-3-oxobutyl phosphate. The active-site Proton donor is His-88. A 5-amino-6-(D-ribitylamino)uracil-binding site is contributed by Phe-113. (2S)-2-hydroxy-3-oxobutyl phosphate is bound at residue Arg-127.

It belongs to the DMRL synthase family. Forms an icosahedral capsid composed of 60 subunits, arranged as a dodecamer of pentamers.

It catalyses the reaction (2S)-2-hydroxy-3-oxobutyl phosphate + 5-amino-6-(D-ribitylamino)uracil = 6,7-dimethyl-8-(1-D-ribityl)lumazine + phosphate + 2 H2O + H(+). It participates in cofactor biosynthesis; riboflavin biosynthesis; riboflavin from 2-hydroxy-3-oxobutyl phosphate and 5-amino-6-(D-ribitylamino)uracil: step 1/2. In terms of biological role, catalyzes the formation of 6,7-dimethyl-8-ribityllumazine by condensation of 5-amino-6-(D-ribitylamino)uracil with 3,4-dihydroxy-2-butanone 4-phosphate. This is the penultimate step in the biosynthesis of riboflavin. The chain is 6,7-dimethyl-8-ribityllumazine synthase from Geobacillus sp. (strain WCH70).